The following is a 64-amino-acid chain: MPKAKTHSGASKRFRRTGTGKIVRQKANRRHLLEHKPTKRTRRLDGRTTVSAADNSRINKLLNG.

Over residues 1–42 (MPKAKTHSGASKRFRRTGTGKIVRQKANRRHLLEHKPTKRTR) the composition is skewed to basic residues. The tract at residues 1 to 64 (MPKAKTHSGA…NSRINKLLNG (64 aa)) is disordered. Residues 48–58 (TTVSAADNSRI) are compositionally biased toward polar residues.

The protein belongs to the bacterial ribosomal protein bL35 family.

The polypeptide is Large ribosomal subunit protein bL35 (Mycolicibacterium smegmatis (strain ATCC 700084 / mc(2)155) (Mycobacterium smegmatis)).